Reading from the N-terminus, the 149-residue chain is 1,4-dihydroxy-2-naphthoyl-CoA hydrolase (149 aa).

Residue aspartate 19 is part of the active site.

This sequence belongs to the 4-hydroxybenzoyl-CoA thioesterase family. DHNA-CoA hydrolase subfamily.

It catalyses the reaction 1,4-dihydroxy-2-naphthoyl-CoA + H2O = 1,4-dihydroxy-2-naphthoate + CoA + H(+). It participates in cofactor biosynthesis; phylloquinone biosynthesis. It functions in the pathway quinol/quinone metabolism; 1,4-dihydroxy-2-naphthoate biosynthesis; 1,4-dihydroxy-2-naphthoate from chorismate: step 7/7. Functionally, catalyzes the hydrolysis of 1,4-dihydroxy-2-naphthoyl-CoA (DHNA-CoA) to 1,4-dihydroxy-2-naphthoate (DHNA), a reaction involved in phylloquinone (vitamin K1) biosynthesis. In Synechococcus sp. (strain CC9605), this protein is 1,4-dihydroxy-2-naphthoyl-CoA hydrolase.